Reading from the N-terminus, the 310-residue chain is Homoserine kinase (310 aa).

91 to 101 serves as a coordination point for ATP; sequence PIGSGLGSSAC.

This sequence belongs to the GHMP kinase family. Homoserine kinase subfamily.

Its subcellular location is the cytoplasm. It catalyses the reaction L-homoserine + ATP = O-phospho-L-homoserine + ADP + H(+). The protein operates within amino-acid biosynthesis; L-threonine biosynthesis; L-threonine from L-aspartate: step 4/5. Catalyzes the ATP-dependent phosphorylation of L-homoserine to L-homoserine phosphate. This is Homoserine kinase from Shigella flexneri serotype 5b (strain 8401).